The primary structure comprises 312 residues: Glyoxylate/hydroxypyruvate reductase A (312 aa).

Arginine 227 is an active-site residue. The active-site Proton donor is histidine 275.

The protein belongs to the D-isomer specific 2-hydroxyacid dehydrogenase family. GhrA subfamily.

It is found in the cytoplasm. The enzyme catalyses glycolate + NADP(+) = glyoxylate + NADPH + H(+). It carries out the reaction (R)-glycerate + NAD(+) = 3-hydroxypyruvate + NADH + H(+). It catalyses the reaction (R)-glycerate + NADP(+) = 3-hydroxypyruvate + NADPH + H(+). In terms of biological role, catalyzes the NADPH-dependent reduction of glyoxylate and hydroxypyruvate into glycolate and glycerate, respectively. The sequence is that of Glyoxylate/hydroxypyruvate reductase A from Shigella dysenteriae serotype 1 (strain Sd197).